A 568-amino-acid chain; its full sequence is Potassium-transporting ATPase potassium-binding subunit (568 aa).

The next 10 membrane-spanning stretches (helical) occupy residues 3-23 (TEVL…YPLG), 68-88 (LLVV…TQGV), 133-153 (FVIM…MAGI), 180-200 (LLPL…PMGF), 256-276 (VECW…GFYL), 281-301 (LGYS…CINV), 375-395 (FGGV…AVFI), 421-441 (IVAL…AYLF), 497-517 (IVLI…AGIL), and 535-555 (VTFG…SFFP).

Belongs to the KdpA family. In terms of assembly, the system is composed of three essential subunits: KdpA, KdpB and KdpC.

The protein resides in the cell inner membrane. Functionally, part of the high-affinity ATP-driven potassium transport (or Kdp) system, which catalyzes the hydrolysis of ATP coupled with the electrogenic transport of potassium into the cytoplasm. This subunit binds the periplasmic potassium ions and delivers the ions to the membrane domain of KdpB through an intramembrane tunnel. This is Potassium-transporting ATPase potassium-binding subunit from Phocaeicola vulgatus (strain ATCC 8482 / DSM 1447 / JCM 5826 / CCUG 4940 / NBRC 14291 / NCTC 11154) (Bacteroides vulgatus).